A 24-amino-acid polypeptide reads, in one-letter code: Myotoxin TmC4-47.2 (24 aa).

The disordered stretch occupies residues Lys1–Met24. The span at Trp10–Met24 shows a compositional bias: basic residues. Residues His13–Met24 enclose the C-type lectin domain.

As to expression, expressed by the venom gland.

The protein resides in the secreted. Able to depolarize frog skeletal muscle fibers, but has no effects on squid giant axons. Tetrodotoxin is able to partially antagonize the depolarization. Induces myonecrosis. The protein is Myotoxin TmC4-47.2 of Thalassophryne maculosa (Cano toadfish).